An 880-amino-acid chain; its full sequence is Valine--tRNA ligase (880 aa).

The short motif at 49-59 is the 'HIGH' region element; it reads PNVTGRLHLGH. The 'KMSKS' region motif lies at 525–529; that stretch reads KMSKS. An ATP-binding site is contributed by K528. A coiled-coil region spans residues 809-879; the sequence is LEGLINIDEE…AVQKRMAELK (71 aa).

It belongs to the class-I aminoacyl-tRNA synthetase family. ValS type 1 subfamily. As to quaternary structure, monomer.

It localises to the cytoplasm. It carries out the reaction tRNA(Val) + L-valine + ATP = L-valyl-tRNA(Val) + AMP + diphosphate. As ValRS can inadvertently accommodate and process structurally similar amino acids such as threonine, to avoid such errors, it has a 'posttransfer' editing activity that hydrolyzes mischarged Thr-tRNA(Val) in a tRNA-dependent manner. Catalyzes the attachment of valine to tRNA(Val). The protein is Valine--tRNA ligase of Bacillus subtilis (strain 168).